A 171-amino-acid polypeptide reads, in one-letter code: T-cell surface glycoprotein CD3 delta chain (171 aa).

The first 21 residues, 1–21 (MEHSRFLSGLILAAFLSRVSP), serve as a signal peptide directing secretion. Residues 22 to 104 (YEVEMEELED…NCVELDSATL (83 aa)) are Extracellular-facing. Cysteine 37 and cysteine 72 form a disulfide bridge. N-linked (GlcNAc...) asparagine glycosylation is present at asparagine 38. The helical transmembrane segment at 105-125 (AGIIVTDIIATLLLALGVYCF) threads the bilayer. Over 126–171 (AGHEMGRFSRAADTQDLLRNDQLYQPLRDRNDGQYSRLGENWARNK) the chain is Cytoplasmic. Residues 138 to 166 (DTQDLLRNDQLYQPLRDRNDGQYSRLGEN) form the ITAM domain. 2 positions are modified to phosphotyrosine: tyrosine 149 and tyrosine 160.

In terms of assembly, the TCR-CD3 complex is composed of a CD3D/CD3E and a CD3G/CD3E heterodimers that preferentially associate with TCRalpha and TCRbeta, respectively, to form TCRalpha/CD3E/CD3G and TCRbeta/CD3G/CD3E trimers. In turn, the hexamer interacts with CD3Z homodimer to form the TCR-CD3 complex. Alternatively, TCRalpha and TCRbeta can be replaced by TCRgamma and TCRdelta. Interacts with coreceptors CD4 and CD8. Post-translationally, phosphorylated on Tyr residues after T-cell receptor triggering by LCK in association with CD4/CD8. As to expression, CD3D is mostly present on T-lymphocytes with its TCR-CD3 partners. Present also in fetal NK-cells.

It localises to the cell membrane. Part of the TCR-CD3 complex present on T-lymphocyte cell surface that plays an essential role in adaptive immune response. When antigen presenting cells (APCs) activate T-cell receptor (TCR), TCR-mediated signals are transmitted across the cell membrane by the CD3 chains CD3D, CD3E, CD3G and CD3Z. All CD3 chains contain immunoreceptor tyrosine-based activation motifs (ITAMs) in their cytoplasmic domain. Upon TCR engagement, these motifs become phosphorylated by Src family protein tyrosine kinases LCK and FYN, resulting in the activation of downstream signaling pathways. In addition of this role of signal transduction in T-cell activation, CD3D plays an essential role in thymocyte differentiation. Indeed, participates in correct intracellular TCR-CD3 complex assembly and surface expression. In absence of a functional TCR-CD3 complex, thymocytes are unable to differentiate properly. Interacts with CD4 and CD8 and thus serves to establish a functional link between the TCR and coreceptors CD4 and CD8, which is needed for activation and positive selection of CD4 or CD8 T-cells. This is T-cell surface glycoprotein CD3 delta chain (CD3D) from Sus scrofa (Pig).